Reading from the N-terminus, the 337-residue chain is Holliday junction branch migration complex subunit RuvB (337 aa).

The large ATPase domain (RuvB-L) stretch occupies residues 1–179 (MTHQVSVLHQ…FSFTGRVAYY (179 aa)). ATP contacts are provided by residues L18, R19, G60, K63, T64, S65, 126 to 128 (EDY), R169, Y179, and R216. Residue T64 coordinates Mg(2+). A small ATPAse domain (RuvB-S) region spans residues 180-250 (SDEDLATILR…VAEKALAMLL (71 aa)). The head domain (RuvB-H) stretch occupies residues 253 to 337 (EWGLNEIDIK…DNLQSLGEEK (85 aa)). Positions 308 and 313 each coordinate DNA.

This sequence belongs to the RuvB family. Homohexamer. Forms an RuvA(8)-RuvB(12)-Holliday junction (HJ) complex. HJ DNA is sandwiched between 2 RuvA tetramers; dsDNA enters through RuvA and exits via RuvB. An RuvB hexamer assembles on each DNA strand where it exits the tetramer. Each RuvB hexamer is contacted by two RuvA subunits (via domain III) on 2 adjacent RuvB subunits; this complex drives branch migration. In the full resolvosome a probable DNA-RuvA(4)-RuvB(12)-RuvC(2) complex forms which resolves the HJ.

Its subcellular location is the cytoplasm. It carries out the reaction ATP + H2O = ADP + phosphate + H(+). Functionally, the RuvA-RuvB-RuvC complex processes Holliday junction (HJ) DNA during genetic recombination and DNA repair, while the RuvA-RuvB complex plays an important role in the rescue of blocked DNA replication forks via replication fork reversal (RFR). RuvA specifically binds to HJ cruciform DNA, conferring on it an open structure. The RuvB hexamer acts as an ATP-dependent pump, pulling dsDNA into and through the RuvAB complex. RuvB forms 2 homohexamers on either side of HJ DNA bound by 1 or 2 RuvA tetramers; 4 subunits per hexamer contact DNA at a time. Coordinated motions by a converter formed by DNA-disengaged RuvB subunits stimulates ATP hydrolysis and nucleotide exchange. Immobilization of the converter enables RuvB to convert the ATP-contained energy into a lever motion, pulling 2 nucleotides of DNA out of the RuvA tetramer per ATP hydrolyzed, thus driving DNA branch migration. The RuvB motors rotate together with the DNA substrate, which together with the progressing nucleotide cycle form the mechanistic basis for DNA recombination by continuous HJ branch migration. Branch migration allows RuvC to scan DNA until it finds its consensus sequence, where it cleaves and resolves cruciform DNA. The chain is Holliday junction branch migration complex subunit RuvB from Chlamydia abortus (strain DSM 27085 / S26/3) (Chlamydophila abortus).